Consider the following 188-residue polypeptide: Elongation factor P (188 aa).

K34 bears the N6-(3,6-diaminohexanoyl)-5-hydroxylysine mark.

Belongs to the elongation factor P family. May be beta-lysylated on the epsilon-amino group of Lys-34 by the combined action of EpmA and EpmB, and then hydroxylated on the C5 position of the same residue by EpmC (if this protein is present). Lysylation is critical for the stimulatory effect of EF-P on peptide-bond formation. The lysylation moiety may extend toward the peptidyltransferase center and stabilize the terminal 3-CCA end of the tRNA. Hydroxylation of the C5 position on Lys-34 may allow additional potential stabilizing hydrogen-bond interactions with the P-tRNA.

Its subcellular location is the cytoplasm. The protein operates within protein biosynthesis; polypeptide chain elongation. Functionally, involved in peptide bond synthesis. Alleviates ribosome stalling that occurs when 3 or more consecutive Pro residues or the sequence PPG is present in a protein, possibly by augmenting the peptidyl transferase activity of the ribosome. Modification of Lys-34 is required for alleviation. The chain is Elongation factor P from Xylella fastidiosa (strain M23).